We begin with the raw amino-acid sequence, 117 residues long: uncharacterized protein (117 aa).

This is an uncharacterized protein from Escherichia coli (strain K12).